A 511-amino-acid chain; its full sequence is Lysine--tRNA ligase (511 aa).

Mg(2+) is bound by residues E422 and E429.

It belongs to the class-II aminoacyl-tRNA synthetase family. In terms of assembly, homodimer. Mg(2+) is required as a cofactor.

The protein localises to the cytoplasm. The enzyme catalyses tRNA(Lys) + L-lysine + ATP = L-lysyl-tRNA(Lys) + AMP + diphosphate. This chain is Lysine--tRNA ligase, found in Chlorobaculum tepidum (strain ATCC 49652 / DSM 12025 / NBRC 103806 / TLS) (Chlorobium tepidum).